The primary structure comprises 284 residues: Tropomyosin alpha-1 chain (284 aa).

Met-1 carries the N-acetylmethionine modification. A disordered region spans residues 1–38 (MDAIKKKMQMLKLDKENALDRAEQAEADKKAAEDRSKQ). A coiled-coil region spans residues 1 to 284 (MDAIKKKMQM…DHALNDMTSI (284 aa)). Residues 12–38 (KLDKENALDRAEQAEADKKAAEDRSKQ) are compositionally biased toward basic and acidic residues. Phosphoserine is present on Ser-45. The tract at residues 116 to 136 (AEKAADESERGMKVIESRAQK) is disordered. Phosphoserine occurs at positions 174, 186, 206, and 252. Tyr-261 is subject to Phosphotyrosine. Phosphoserine is present on residues Ser-271 and Ser-283.

It belongs to the tropomyosin family. In terms of assembly, homodimer. Heterodimer of an alpha (TPM1, TPM3 or TPM4) and a beta (TPM2) chain. Interacts with HRG (via the HRR domain); the interaction contributes to the antiangiogenic properties of the histidine/proline-rich region (HRR) of HRG. Interacts (via N-terminus) with LMOD2 (via N-terminus) and TMOD1 (via N-terminus). Phosphorylated at Ser-283 by DAPK1 in response to oxidative stress and this phosphorylation enhances stress fiber formation in endothelial cells.

The protein resides in the cytoplasm. It localises to the cytoskeleton. Binds to actin filaments in muscle and non-muscle cells. Plays a central role, in association with the troponin complex, in the calcium dependent regulation of vertebrate striated muscle contraction. Smooth muscle contraction is regulated by interaction with caldesmon. In non-muscle cells is implicated in stabilizing cytoskeleton actin filaments. The polypeptide is Tropomyosin alpha-1 chain (Tpm1) (Mus musculus (Mouse)).